The primary structure comprises 1000 residues: uncharacterized protein (1000 aa).

Positions 787-809 (RQYEKLKRQRAKSETERHQERHG) are enriched in basic and acidic residues. Positions 787–812 (RQYEKLKRQRAKSETERHQERHGKLS) are disordered.

This is an uncharacterized protein from Picosynechococcus sp. (strain ATCC 27264 / PCC 7002 / PR-6) (Agmenellum quadruplicatum).